Consider the following 199-residue polypeptide: Imidazole glycerol phosphate synthase subunit HisH 2 (199 aa).

Positions Met-1–Cys-199 constitute a Glutamine amidotransferase type-1 domain. The active-site Nucleophile is Cys-76. Catalysis depends on residues His-177 and Glu-179.

As to quaternary structure, heterodimer of HisH and HisF.

It is found in the cytoplasm. The enzyme catalyses 5-[(5-phospho-1-deoxy-D-ribulos-1-ylimino)methylamino]-1-(5-phospho-beta-D-ribosyl)imidazole-4-carboxamide + L-glutamine = D-erythro-1-(imidazol-4-yl)glycerol 3-phosphate + 5-amino-1-(5-phospho-beta-D-ribosyl)imidazole-4-carboxamide + L-glutamate + H(+). The catalysed reaction is L-glutamine + H2O = L-glutamate + NH4(+). It functions in the pathway amino-acid biosynthesis; L-histidine biosynthesis; L-histidine from 5-phospho-alpha-D-ribose 1-diphosphate: step 5/9. IGPS catalyzes the conversion of PRFAR and glutamine to IGP, AICAR and glutamate. The HisH subunit provides the glutamine amidotransferase activity that produces the ammonia necessary to HisF for the synthesis of IGP and AICAR. The chain is Imidazole glycerol phosphate synthase subunit HisH 2 from Legionella pneumophila (strain Lens).